A 353-amino-acid polypeptide reads, in one-letter code: Glucose import ATP-binding protein GlcV (353 aa).

The ABC transporter domain maps to 4 to 241 (IIVKNVSKVF…PVSIQVASLI (238 aa)). Residues 40–46 (SGAGKTT), Q89, and E166 contribute to the ATP site.

It belongs to the ABC transporter superfamily. As to quaternary structure, the complex is composed of two ATP-binding proteins (GlcV), two transmembrane proteins (GlcT and GlcU) and a solute-binding protein (GlcS). Forms transient head-to-tail homodimers in the presence of ATP-Mg(2+).

The protein resides in the cell membrane. It carries out the reaction D-glucose(out) + ATP + H2O = D-glucose(in) + ADP + phosphate + H(+). Functionally, part of the ABC transporter complex GlcSTUV involved in glucose uptake. Responsible for energy coupling to the transport system. In vitro, as a free subunit, exhibits a constitutive ATPase activity. The sequence is that of Glucose import ATP-binding protein GlcV from Saccharolobus solfataricus (strain ATCC 35092 / DSM 1617 / JCM 11322 / P2) (Sulfolobus solfataricus).